Consider the following 83-residue polypeptide: MSRLTIDMTDQQHQSLKALAALQGKTIKQYALERLFPGDADADQAWQELKTMLGNRINDGLAGKVSTKSVGEILDEELSGDRA.

In terms of assembly, forms a homodimer in solution, interacts with ParD, possibly as a ParD(2)-ParE(2) heterotetramer, which neutralizes the toxic activity of ParE. Both the homodimer and heterotetramer bind DNA, although genetically only ParD is required for full operon repression. Another study has shown that it is a ParD homotetramer that binds the promoter.

Antitoxin component of a type II toxin-antitoxin (TA) system involved in plasmid partition. Inhibits the anti-DNA gyrase activity of toxin ParE; reverses and restores gyrase catalytic activity in vitro. The parDE operon alone is capable of stabilizing an RK2-derived minireplicon under defined growth conditions in several different Gram-negative bacteria. It does so by the post-segregational killing (PSK) of plasmid-free cells, also referred to as a plasmid addiction system. Binds its own promoter, autorepressing it; gentically only ParD is required for full autorepression. The sequence is that of Antitoxin ParD (parD) from Escherichia coli.